The primary structure comprises 663 residues: Protein THEMIS2 (663 aa).

CABIT regions lie at residues 2–237 (EPVP…TASS) and 238–515 (QHIH…EAEG). The segment at 545–663 (ASESQAPPPR…DMDDHDYEEI (119 aa)) is disordered. The segment covering 559-577 (QGINKKQQNIQSCKESSVK) has biased composition (polar residues). Thr-596 bears the Phosphothreonine mark. Polar residues predominate over residues 621-641 (NPQTQNSVLSMKPKTSSSLGK). A compositionally biased stretch (acidic residues) spans 653–663 (PDMDDHDYEEI). Tyr-660 carries the post-translational modification Phosphotyrosine.

This sequence belongs to the themis family. Interacts with VAV1. Interacts with LAT. Interacts constitutively with GRB2, LYN and PLCG2; these interactions increase the activation of PLCG2 and its downstream pathways following B cell receptor stimulation. Post-translationally, phosphorylation at Tyr-660 is induced by LPS. Phosphorylated by Src kinases (Lck or Fyn) following BCR engagement. As to expression, expressed in both developing and mature B-cells with high expression in immature, follicular and B1 B cells. Also expressed in macrophages and dendritic cells. Down-regulated in splenocytes of mice developing arthritis in a collagen-induced model, not in those of mice failing to develop the disease. Transiently down-regulated in splenocytes of mice infected with influenza virus.

The protein localises to the nucleus. Its subcellular location is the cytoplasm. Its function is as follows. May constitute a control point in macrophage inflammatory response, promoting LPS-induced TLR4-mediated TNF production. Determines the threshold for activation of B cells by low-affinity and low-avidity ligands via PLCG2 activation and its downstream pathways. The sequence is that of Protein THEMIS2 from Mus musculus (Mouse).